We begin with the raw amino-acid sequence, 395 residues long: MLRWITAGESHGPALVAMLEGMVAGVEVTSEDISTQLARRRLGYGRGARMKFEADKVTIVGGVRHGRTLGGPIAVEVGNTEWPKWETIMSADPVDADLLADQARNAPLTRPRPGHADYSGMLKYGFDDARPVLERASARETAARVAAATFARGFLRQVFGVEVLSHVISIGASDPYAGPEPTASDLAAIDASPVRAFDKAAEESMIAEIEAAKRDGDTLGGIVEVVIHGLPVGLGSFISGADRLDARLASALMGIQAIKGVEVGDGFETARRRGSQAHDEMRPGPDGILRSTNRAGGLEGGMTNGEALRVRAAMKPISTVPRALATVDMSTGEEAVAIHQRSDVCAVPAAGVVAEAMVALVVAQAALEKFGGDSVAETAANYERYASGVAARLAR.

NADP(+)-binding residues include Arg40 and Arg46. Residues 135-137 and 256-257 contribute to the FMN site; these read RAS and QA. The span at 272 to 283 shows a compositional bias: basic and acidic residues; that stretch reads RRGSQAHDEMRP. The interval 272 to 296 is disordered; sequence RRGSQAHDEMRPGPDGILRSTNRAG. FMN-binding positions include Gly300, 315-319, and Arg341; that span reads KPIST.

The protein belongs to the chorismate synthase family. Homotetramer. FMNH2 serves as cofactor.

It carries out the reaction 5-O-(1-carboxyvinyl)-3-phosphoshikimate = chorismate + phosphate. Its pathway is metabolic intermediate biosynthesis; chorismate biosynthesis; chorismate from D-erythrose 4-phosphate and phosphoenolpyruvate: step 7/7. In terms of biological role, catalyzes the anti-1,4-elimination of the C-3 phosphate and the C-6 proR hydrogen from 5-enolpyruvylshikimate-3-phosphate (EPSP) to yield chorismate, which is the branch point compound that serves as the starting substrate for the three terminal pathways of aromatic amino acid biosynthesis. This reaction introduces a second double bond into the aromatic ring system. The polypeptide is Chorismate synthase (Rhodococcus opacus (strain B4)).